The primary structure comprises 287 residues: DegV domain-containing protein DR_0500 (287 aa).

A DegV domain is found at 7–280 (FAVVTDGGLD…PRALGVAAAP (274 aa)). Hexadecanoate contacts are provided by serine 62 and serine 93.

In terms of biological role, may bind long-chain fatty acids, such as palmitate, and may play a role in lipid transport or fatty acid metabolism. This chain is DegV domain-containing protein DR_0500, found in Deinococcus radiodurans (strain ATCC 13939 / DSM 20539 / JCM 16871 / CCUG 27074 / LMG 4051 / NBRC 15346 / NCIMB 9279 / VKM B-1422 / R1).